A 359-amino-acid polypeptide reads, in one-letter code: Histidinol-phosphate aminotransferase (359 aa).

Lys217 carries the N6-(pyridoxal phosphate)lysine modification.

It belongs to the class-II pyridoxal-phosphate-dependent aminotransferase family. Histidinol-phosphate aminotransferase subfamily. As to quaternary structure, homodimer. The cofactor is pyridoxal 5'-phosphate.

It carries out the reaction L-histidinol phosphate + 2-oxoglutarate = 3-(imidazol-4-yl)-2-oxopropyl phosphate + L-glutamate. The protein operates within amino-acid biosynthesis; L-histidine biosynthesis; L-histidine from 5-phospho-alpha-D-ribose 1-diphosphate: step 7/9. This is Histidinol-phosphate aminotransferase (hisC) from Salmonella typhimurium (strain LT2 / SGSC1412 / ATCC 700720).